The following is a 147-amino-acid chain: Protein phosphatase 1 regulatory subunit 14B (147 aa).

The interval 1–55 is disordered; it reads MADSGTAGGAALAAPAPGPGSGGPGPRVYFQSPPGAAGEGPGGADDEGPVRRQGK. Ala-2 carries the post-translational modification N-acetylalanine. Ser-21 carries the phosphoserine modification. At Tyr-29 the chain carries Phosphotyrosine. Residue Ser-32 is modified to Phosphoserine. Thr-57 carries the phosphothreonine modification. A coiled-coil region spans residues 61 to 103; that stretch reads DRKELRKRLNLEEWILEQLTRLYDCQEEEIPELEIDVDELLDM.

It belongs to the PP1 inhibitor family. Phosphorylated primarily on Thr-57 by PKC (in vitro). An unknown Ser is also phosphorylated by PKC (in vitro). In terms of tissue distribution, ubiquitous. Expressed at low levels.

The protein localises to the cytoplasm. Its function is as follows. Inhibitor of PPP1CA. Has over 50-fold higher inhibitory activity when phosphorylated. This Homo sapiens (Human) protein is Protein phosphatase 1 regulatory subunit 14B (PPP1R14B).